A 486-amino-acid chain; its full sequence is ATP-dependent rRNA helicase rrp3 (486 aa).

Residues 1–60 (MSSVKRRKTDKNPSLEGLKSKKTKESKKESHTPSPEPIEDTEDNRVIEETEEAEEDDAPK) form a disordered region. Residues 60–88 (KSFKDLGIVDSLCEACDTLGYKAPTPIQR) carry the Q motif motif. The Helicase ATP-binding domain occupies 91-262 (IPLALQGRDL…RASLKDPLRV (172 aa)). Residue 104-111 (AETGSGKT) participates in ATP binding. Positions 210 to 213 (DEAD) match the DEAD box motif. Residues 286 to 434 (HKDTYLIYLL…EYPTVKDEVM (149 aa)) enclose the Helicase C-terminal domain. 2 stretches are compositionally biased toward basic and acidic residues: residues 447-460 (ARNEMKNLHEDRGK) and 476-486 (RGRDEMDREEG). Residues 447-486 (ARNEMKNLHEDRGKKGAVLKGRRPANGAKRGRDEMDREEG) form a disordered region.

It belongs to the DEAD box helicase family. DDX47/RRP3 subfamily. As to quaternary structure, interacts with the SSU processome.

The protein localises to the nucleus. It catalyses the reaction ATP + H2O = ADP + phosphate + H(+). In terms of biological role, ATP-dependent rRNA helicase required for pre-ribosomal RNA processing. Involved in the maturation of the 35S-pre-rRNA and to its cleavage to mature 18S rRNA. This chain is ATP-dependent rRNA helicase rrp3, found in Botryotinia fuckeliana (strain B05.10) (Noble rot fungus).